Here is a 1209-residue protein sequence, read N- to C-terminus: Zinc finger protein 804A (1209 aa).

The C2H2-type zinc finger occupies 57-81; it reads FYCELCDKQYYKHQEFDNHINSYDH. Over residues 380–394 the composition is skewed to basic and acidic residues; it reads VKHNEASTTEVENKN. 2 disordered regions span residues 380 to 401 and 792 to 860; these read VKHNEASTTEVENKNGPETLAP and PEEF…MKPQ. Residues 807-819 are compositionally biased toward basic residues; sequence KPKKKRRRKRGRF. 2 stretches are compositionally biased toward basic and acidic residues: residues 826–836 and 848–860; these read LELKENTDYPV and LISEDKKEKMKPQ.

This Homo sapiens (Human) protein is Zinc finger protein 804A (ZNF804A).